A 175-amino-acid polypeptide reads, in one-letter code: Protein FanH (175 aa).

A signal peptide spans 1–20 (MIKKVPVLLFFMASISITHA). Residues cysteine 39 and cysteine 77 are joined by a disulfide bond.

Its subcellular location is the fimbrium. Involved in the biosynthesis of K99 fimbriae. This chain is Protein FanH (fanH), found in Escherichia coli.